The primary structure comprises 430 residues: Enolase (430 aa).

Glutamine 163 is a (2R)-2-phosphoglycerate binding site. Catalysis depends on glutamate 205, which acts as the Proton donor. Residues aspartate 242, glutamate 288, and aspartate 315 each coordinate Mg(2+). Residues lysine 340, arginine 369, serine 370, and lysine 391 each contribute to the (2R)-2-phosphoglycerate site. The Proton acceptor role is filled by lysine 340.

The protein belongs to the enolase family. Mg(2+) serves as cofactor.

Its subcellular location is the cytoplasm. It is found in the secreted. It localises to the cell surface. The enzyme catalyses (2R)-2-phosphoglycerate = phosphoenolpyruvate + H2O. It functions in the pathway carbohydrate degradation; glycolysis; pyruvate from D-glyceraldehyde 3-phosphate: step 4/5. In terms of biological role, catalyzes the reversible conversion of 2-phosphoglycerate (2-PG) into phosphoenolpyruvate (PEP). It is essential for the degradation of carbohydrates via glycolysis. This Aster yellows witches'-broom phytoplasma (strain AYWB) protein is Enolase.